The sequence spans 360 residues: Photosystem II protein D1 (360 aa).

The next 3 helical transmembrane spans lie at 29–46 (YIGW…TATS), 118–133 (HFLL…EWEL), and 142–156 (WIFV…AASA). His118 is a chlorophyll a binding site. Tyr126 serves as a coordination point for pheophytin a. Residues Asp170 and Glu189 each contribute to the [CaMn4O5] cluster site. Residues 197–218 (FHMAGVAGVFGGSLFSAMHGSL) form a helical membrane-spanning segment. Chlorophyll a is bound at residue His198. A quinone is bound by residues His215 and 264-265 (SF). His215 lines the Fe cation pocket. His272 is a binding site for Fe cation. Residues 274–288 (FLAAWPVVGIWLTAL) form a helical membrane-spanning segment. [CaMn4O5] cluster-binding residues include His332, Glu333, Asp342, and Ala344. Residues 345–360 (SNEVLPVAVNAPAVNG) constitute a propeptide that is removed on maturation.

The protein belongs to the reaction center PufL/M/PsbA/D family. PSII is composed of 1 copy each of membrane proteins PsbA, PsbB, PsbC, PsbD, PsbE, PsbF, PsbH, PsbI, PsbJ, PsbK, PsbL, PsbM, PsbT, PsbX, PsbY, PsbZ, Psb30/Ycf12, at least 3 peripheral proteins of the oxygen-evolving complex and a large number of cofactors. It forms dimeric complexes. Requires The D1/D2 heterodimer binds P680, chlorophylls that are the primary electron donor of PSII, and subsequent electron acceptors. It shares a non-heme iron and each subunit binds pheophytin, quinone, additional chlorophylls, carotenoids and lipids. D1 provides most of the ligands for the Mn4-Ca-O5 cluster of the oxygen-evolving complex (OEC). There is also a Cl(-1) ion associated with D1 and D2, which is required for oxygen evolution. The PSII complex binds additional chlorophylls, carotenoids and specific lipids. as cofactor. Post-translationally, tyr-161 forms a radical intermediate that is referred to as redox-active TyrZ, YZ or Y-Z. In terms of processing, C-terminally processed by CTPA; processing is essential to allow assembly of the oxygen-evolving complex and thus photosynthetic growth.

It localises to the plastid. Its subcellular location is the chloroplast thylakoid membrane. The catalysed reaction is 2 a plastoquinone + 4 hnu + 2 H2O = 2 a plastoquinol + O2. In terms of biological role, photosystem II (PSII) is a light-driven water:plastoquinone oxidoreductase that uses light energy to abstract electrons from H(2)O, generating O(2) and a proton gradient subsequently used for ATP formation. It consists of a core antenna complex that captures photons, and an electron transfer chain that converts photonic excitation into a charge separation. The D1/D2 (PsbA/PsbD) reaction center heterodimer binds P680, the primary electron donor of PSII as well as several subsequent electron acceptors. The polypeptide is Photosystem II protein D1 (Heterosigma akashiwo (Chromophytic alga)).